The following is a 263-amino-acid chain: Outer membrane lipoprotein 3 (263 aa).

Residues 1–19 (MKIMKLAGAVAIFSLFLTA) form the signal peptide. C20 carries the N-palmitoyl cysteine lipid modification. C20 is lipidated: S-diacylglycerol cysteine.

It belongs to the NlpA lipoprotein family.

It localises to the cell outer membrane. The polypeptide is Outer membrane lipoprotein 3 (plpC) (Mannheimia haemolytica (Pasteurella haemolytica)).